Consider the following 160-residue polypeptide: Nucleotide-binding protein MADE_1020535 (160 aa).

Belongs to the YajQ family.

Nucleotide-binding protein. The polypeptide is Nucleotide-binding protein MADE_1020535 (Alteromonas mediterranea (strain DSM 17117 / CIP 110805 / LMG 28347 / Deep ecotype)).